Consider the following 113-residue polypeptide: Mini zinc finger protein 3 (113 aa).

The ZF-HD dimerization-type; degenerate zinc-finger motif lies at 24 to 83 (YGECRRNHAASTGGHAVDGCREFIAAEDGGGGNSTGAVGVAAAALKCAACGCHRSFHRRV). Positions 93–113 (DCDSGDTSSSSPSSSSSLSSE) are disordered. Low complexity predominate over residues 97–113 (GDTSSSSPSSSSSLSSE).

Homo- and heterodimers.

It is found in the cytoplasm. Inhibits zinc finger homeodomain (ZHD) transcription factors, by interacting with them to prevent both their nuclear localization and their DNA-binding properties. This chain is Mini zinc finger protein 3 (MIF3), found in Oryza sativa subsp. indica (Rice).